The sequence spans 486 residues: Kynurenine 3-monooxygenase (486 aa).

Helical transmembrane passes span 401-424 (LLFWMMPNTWVPLYNSVSFSHMRY) and 437-459 (ILTRVLYGASIASVAAIGGLCYR).

It belongs to the aromatic-ring hydroxylase family. KMO subfamily. The cofactor is FAD.

The protein localises to the mitochondrion. It localises to the membrane. The catalysed reaction is L-kynurenine + NADPH + O2 + H(+) = 3-hydroxy-L-kynurenine + NADP(+) + H2O. It functions in the pathway cofactor biosynthesis; NAD(+) biosynthesis; quinolinate from L-kynurenine: step 1/3. Catalyzes the hydroxylation of L-kynurenine (L-Kyn) to form 3-hydroxy-L-kynurenine (L-3OHKyn). Required for synthesis of quinolinic acid. The chain is Kynurenine 3-monooxygenase (kh) from Anopheles gambiae (African malaria mosquito).